The sequence spans 143 residues: Cytotoxic L-amino-acid oxidase (143 aa).

This sequence belongs to the flavin monoamine oxidase family. FAD serves as cofactor.

It catalyses the reaction an L-alpha-amino acid + O2 + H2O = a 2-oxocarboxylate + H2O2 + NH4(+). Functionally, cytotoxic L-amino acid oxidase with high oxidase activity towards DL-methionine and L-methionine, L-phenylalanine, DL-norleucine, L-isoleucine, L-arginine, L-tyrosine, and DL-leucine. Shows relatively low activity towards DL-lysine and L-lysine, DL-asparagine, DL-valine, L-histidine, DL-threonine, DL-tryptophan, and L-glutamic acid; and no activity towards L-cysteine, L-glycine, L-proline, L-oxyproline, DL-serine, and DL-aspartic acid. Does not use benzylamine, ethanolamine, diethylamine, meta- and para-phenylendiamine, ortho-, meta- and para-aminophenols, or putrescin as a substrate. Acts as a toxin by inducing chromatin condensation, as well as DNA and nucleus fragmentation, which are typical for apoptosis. Probably induces cell damage indirectly via the generation of free radicals and oxidant agents that can trigger cell impairment and apoptosis by a caspase-independent pathway. The sequence is that of Cytotoxic L-amino-acid oxidase from Amanita phalloides (Death cap).